Reading from the N-terminus, the 209-residue chain is MTYCRKANQTSYPFILPDLPYAKESFKPHFTCETFDYHHGKHHNSYVQNLNNLLKDREELQKKDLEGIIKWSSKNSEVTVFNNASQIWNHTFFWYSIKPHGGGKPSGKVFEQISQDFGSFEQFCEQFKQEALGQFGSGWVWVVYNNNKLQIIKTSNADTPIVNLMKPILVCDVWEHAYYIDYRNKRSDYIDIFISHMINWKFVEDNLIQ.

Residues H38, H90, D172, and H176 each contribute to the Fe(3+) site. Positions 38, 90, 172, and 176 each coordinate Mn(2+).

Belongs to the iron/manganese superoxide dismutase family. Mn(2+) serves as cofactor. Fe(3+) is required as a cofactor.

The catalysed reaction is 2 superoxide + 2 H(+) = H2O2 + O2. In terms of biological role, destroys superoxide anion radicals which are normally produced within the cells and which are toxic to biological systems. Catalyzes the dismutation of superoxide anion radicals into O2 and H2O2 by successive reduction and oxidation of the transition metal ion at the active site. This is Superoxide dismutase [Mn/Fe] (sodB) from Rickettsia typhi (strain ATCC VR-144 / Wilmington).